The sequence spans 150 residues: Urease subunit beta (150 aa).

The segment covering 122 to 140 (GAVVGDSPAATPGTTGATG) has biased composition (low complexity). The interval 122–150 (GAVVGDSPAATPGTTGATGDLPGYLGEGS) is disordered.

The protein belongs to the urease beta subunit family. In terms of assembly, heterotrimer of UreA (gamma), UreB (beta) and UreC (alpha) subunits. Three heterotrimers associate to form the active enzyme.

Its subcellular location is the cytoplasm. The enzyme catalyses urea + 2 H2O + H(+) = hydrogencarbonate + 2 NH4(+). The protein operates within nitrogen metabolism; urea degradation; CO(2) and NH(3) from urea (urease route): step 1/1. The protein is Urease subunit beta of Frankia alni (strain DSM 45986 / CECT 9034 / ACN14a).